A 159-amino-acid polypeptide reads, in one-letter code: MDATFWAFIALVIFVAIVVYMKVPGMIGRTLDERADRIKKELEEARTLREEAQQLLAEYHRKRKEAEKEAGDIVASAEREAKALLEEAKRATEEYVARRNKLAEQKIATAETDAINAVRASAVDLAVAAAGSILAEKVDAKADGNLFNDALAQVKSHLN.

A helical membrane pass occupies residues 1 to 21 (MDATFWAFIALVIFVAIVVYM).

Belongs to the ATPase B chain family. F-type ATPases have 2 components, F(1) - the catalytic core - and F(0) - the membrane proton channel. F(1) has five subunits: alpha(3), beta(3), gamma(1), delta(1), epsilon(1). F(0) has three main subunits: a(1), b(2) and c(10-14). The alpha and beta chains form an alternating ring which encloses part of the gamma chain. F(1) is attached to F(0) by a central stalk formed by the gamma and epsilon chains, while a peripheral stalk is formed by the delta and b chains.

Its subcellular location is the cell inner membrane. In terms of biological role, f(1)F(0) ATP synthase produces ATP from ADP in the presence of a proton or sodium gradient. F-type ATPases consist of two structural domains, F(1) containing the extramembraneous catalytic core and F(0) containing the membrane proton channel, linked together by a central stalk and a peripheral stalk. During catalysis, ATP synthesis in the catalytic domain of F(1) is coupled via a rotary mechanism of the central stalk subunits to proton translocation. Component of the F(0) channel, it forms part of the peripheral stalk, linking F(1) to F(0). This Brucella abortus (strain S19) protein is ATP synthase subunit b 2.